Consider the following 107-residue polypeptide: Iron-sulfur cluster assembly protein CyaY (107 aa).

It belongs to the frataxin family.

In terms of biological role, involved in iron-sulfur (Fe-S) cluster assembly. May act as a regulator of Fe-S biogenesis. The chain is Iron-sulfur cluster assembly protein CyaY from Neisseria meningitidis serogroup B (strain ATCC BAA-335 / MC58).